A 723-amino-acid polypeptide reads, in one-letter code: Protein Aster-A (723 aa).

Over residues 1 to 18 (MFDTTPHSGRSSPSSSPS) the composition is skewed to low complexity. The tract at residues 1–63 (MFDTTPHSGR…SGVSGTLSTQ (63 aa)) is disordered. A compositionally biased stretch (pro residues) spans 28–38 (PSRPPSAPEPE). A GRAM domain is found at 93–160 (EDFRKLFSKL…KEVTCLKKEK (68 aa)). The segment at 257 to 337 (SPSGAADRSQ…DGPTSNLGPL (81 aa)) is disordered. S265, S269, and S273 each carry phosphoserine. The span at 302-314 (DSQLDASSSQTVT) shows a compositional bias: polar residues. Residues 370–541 (SGRLLINSVF…ELAKAEKVSL (172 aa)) enclose the VASt domain. Position 418 is a phosphoserine (S418). Positions 562–601 (LSWRGHRDGPQHPDPDPCTQTSMHTSGSLSSRFSEPSVDQ) are disordered. The span at 566-576 (GHRDGPQHPDP) shows a compositional bias: basic and acidic residues. Residues 579–595 (CTQTSMHTSGSLSSRFS) are compositionally biased toward polar residues. A helical membrane pass occupies residues 610–630 (ALVLISIVLIVLIALNALLFY).

The protein localises to the endoplasmic reticulum membrane. It localises to the cell membrane. Its subcellular location is the cytoplasmic vesicle. The protein resides in the autophagosome. Cholesterol transporter that mediates non-vesicular transport of cholesterol from the plasma membrane (PM) to the endoplasmic reticulum (ER). Contains unique domains for binding cholesterol and the PM, thereby serving as a molecular bridge for the transfer of cholesterol from the PM to the ER. Plays a crucial role in cholesterol homeostasis and has the unique ability to localize to the PM based on the level of membrane cholesterol. In lipid-poor conditions localizes to the ER membrane and in response to excess cholesterol in the PM is recruited to the endoplasmic reticulum-plasma membrane contact sites (EPCS) which is mediated by the GRAM domain. At the EPCS, the sterol-binding VASt/ASTER domain binds to the cholesterol in the PM and facilitates its transfer from the PM to ER. May play a role in tumor progression. Plays a role in autophagy regulation and is required for biogenesis of the autophagosome. This function in autophagy requires its cholesterol-transfer activity. In Rattus norvegicus (Rat), this protein is Protein Aster-A.